The following is a 444-amino-acid chain: Tubulin gamma chain (444 aa).

A GTP-binding site is contributed by 144–150; it reads SGGTGSG.

This sequence belongs to the tubulin family.

The protein resides in the cytoplasm. It localises to the cytoskeleton. It is found in the microtubule organizing center. The protein localises to the centrosome. Its subcellular location is the cell junction. The protein resides in the hemidesmosome. It localises to the adherens junction. Its function is as follows. Tubulin is the major constituent of microtubules. The gamma chain is found at microtubule organizing centers (MTOC) such as the spindle poles or the centrosome, suggesting that it is involved in the minus-end nucleation of microtubule assembly. The chain is Tubulin gamma chain (tbg-1) from Caenorhabditis elegans.